The following is a 296-amino-acid chain: Urease operon transcriptional activator (296 aa).

The region spanning 171 to 268 is the HTH araC/xylS-type domain; the sequence is QAITHLITQE…NMTPSQFRLQ (98 aa). 2 DNA-binding regions (H-T-H motif) span residues 188–209 and 235–258; these read DDVAKALFTTPSTLRRHLNREG and VFQISHRCGFGSNAYFCDVFKRKY.

In terms of biological role, positive regulator of the expression of the urease operon. In Escherichia coli, this protein is Urease operon transcriptional activator (ureR).